Consider the following 999-residue polypeptide: Ulvan lyase, long isoform (999 aa).

The first 21 residues, 1 to 21, serve as a signal peptide directing secretion; sequence MKCLKTLLVSTTLLTAFSLNA. Position 126–127 (126–127) interacts with substrate; the sequence is SH. The Proton donor/acceptor role is filled by His127. Residues Asp189, Asp199, and Lys201 each contribute to the Ca(2+) site. Tyr280 and Arg297 together coordinate substrate. Ca(2+) contacts are provided by Asp300, Asp303, and Tyr305. Tyr361 lines the substrate pocket.

The protein belongs to the polysaccharide lyase 24 family.

Ulvan lyase involved in ulvan degradation. Ulvan is the main polysaccharide component of the Ulvales (green seaweed) cell wall. It is composed of disaccharide building blocks comprising 3-sulfated rhamnose (Rha3S) linked to D-glucuronic acid (GlcA), L-iduronic acid (IduA), or D-xylose (Xyl). Ulvan lyase catalyzes preferentially the endolytic cleavage of the glycosidic bond between Rha3S and the uronic acid GlcA, but not IduA, producing oligosaccharides that have unsaturated 4-deoxy-L-threo-hex-4-enopyranosiduronic acid (deltaUA) at the non-reducing end. The most abundant end products in the degradation of the ulvan polysaccharide were deltaUA-Rha3S disaccharides and deltaUA-Rha3S-IduA-Rha3S and deltaUA-Rha3S-Xyl-Rha3S tetrasaccharides. The sequence is that of Ulvan lyase, long isoform from Alteromonas sp. (strain LOR).